A 178-amino-acid polypeptide reads, in one-letter code: Large ribosomal subunit protein bL17 (178 aa).

The disordered stretch occupies residues 150-178; the sequence is PADEPVVAEENAPQSAVKDAVDECEGKAD. Positions 168–178 are enriched in basic and acidic residues; that stretch reads DAVDECEGKAD.

Belongs to the bacterial ribosomal protein bL17 family. As to quaternary structure, part of the 50S ribosomal subunit. Contacts protein L32.

The chain is Large ribosomal subunit protein bL17 from Geobacter metallireducens (strain ATCC 53774 / DSM 7210 / GS-15).